The sequence spans 189 residues: Elongation factor P (189 aa).

It belongs to the elongation factor P family.

It localises to the cytoplasm. The protein operates within protein biosynthesis; polypeptide chain elongation. Functionally, involved in peptide bond synthesis. Stimulates efficient translation and peptide-bond synthesis on native or reconstituted 70S ribosomes in vitro. Probably functions indirectly by altering the affinity of the ribosome for aminoacyl-tRNA, thus increasing their reactivity as acceptors for peptidyl transferase. The chain is Elongation factor P from Chloroflexus aggregans (strain MD-66 / DSM 9485).